Reading from the N-terminus, the 379-residue chain is Anhydro-N-acetylmuramic acid kinase (379 aa).

Position 12–19 (12–19 (GTSLDGMD)) interacts with ATP.

It belongs to the anhydro-N-acetylmuramic acid kinase family.

The enzyme catalyses 1,6-anhydro-N-acetyl-beta-muramate + ATP + H2O = N-acetyl-D-muramate 6-phosphate + ADP + H(+). Its pathway is amino-sugar metabolism; 1,6-anhydro-N-acetylmuramate degradation. The protein operates within cell wall biogenesis; peptidoglycan recycling. Catalyzes the specific phosphorylation of 1,6-anhydro-N-acetylmuramic acid (anhMurNAc) with the simultaneous cleavage of the 1,6-anhydro ring, generating MurNAc-6-P. Is required for the utilization of anhMurNAc either imported from the medium or derived from its own cell wall murein, and thus plays a role in cell wall recycling. In Gloeobacter violaceus (strain ATCC 29082 / PCC 7421), this protein is Anhydro-N-acetylmuramic acid kinase.